Reading from the N-terminus, the 362-residue chain is MYVKELFVDNFRNLQKQKIEFCEGINIFYGLNAQGKSNLLESIRLLSMGRSFRGSKTTELIKFGEDYFYVKAIICQENNDKKIEFGYKKNENKVIKVNGNKIKSTSELLGQLLTVIFSPEDLNIIKEGPSHRRKYLDSCISVVEKNYLYNLMQYNKILMNRNKLLKSIKEGKSKSILEIFDDQLVEYGAKIIVMRQNYLKNVEINIKKFLLEISNETAEIVYLNSVGLKDASDEEIVKKRLKEKLSKNIDVDLRYFTTQVGPHREDFKIIINGYDSRVYSSQGQQRTAALCLKLSEFEILKKETSEKPVLLLDDVMSELDENRKKYVLERLKGFQTFITHTTKRYLKGDCYFKISNGVVIKE.

Residue 30 to 37 (GLNAQGKS) participates in ATP binding.

The protein belongs to the RecF family.

It is found in the cytoplasm. Its function is as follows. The RecF protein is involved in DNA metabolism; it is required for DNA replication and normal SOS inducibility. RecF binds preferentially to single-stranded, linear DNA. It also seems to bind ATP. This chain is DNA replication and repair protein RecF, found in Thermoanaerobacter pseudethanolicus (strain ATCC 33223 / 39E) (Clostridium thermohydrosulfuricum).